The sequence spans 473 residues: Sensor histidine kinase YclK (473 aa).

The Cytoplasmic portion of the chain corresponds to 1 to 9 (MMKIKYLYQ). Residues 10–30 (LLLSHISILILAFVIIISLFS) form a helical membrane-spanning segment. The Extracellular segment spans residues 31–164 (HFVKEFAYQN…GVEQMVNQVN (134 aa)). A helical transmembrane segment spans residues 165–185 (LYMFYAVISTLVITILVSWLL). The Cytoplasmic portion of the chain corresponds to 186–473 (SKFHVKRIQK…IRLPLTAKQQ (288 aa)). One can recognise an HAMP domain in the interval 187-239 (KFHVKRIQKLREATDKVASGDYDIHLENSYGDEIGVLASDFNIMAKKLKQSRD). One can recognise a Histidine kinase domain in the interval 254-470 (DVSHELKTPL…KFIIRLPLTA (217 aa)). His257 is modified (phosphohistidine; by autocatalysis).

The protein localises to the cell membrane. It carries out the reaction ATP + protein L-histidine = ADP + protein N-phospho-L-histidine.. In terms of biological role, could be member of the two-component regulatory system YclK/YclJ. Potentially phosphorylates YclJ. The polypeptide is Sensor histidine kinase YclK (yclK) (Bacillus subtilis (strain 168)).